A 157-amino-acid chain; its full sequence is Endoribonuclease YbeY (157 aa).

Zn(2+) is bound by residues His-113, His-117, and His-123.

This sequence belongs to the endoribonuclease YbeY family. The cofactor is Zn(2+).

The protein resides in the cytoplasm. Single strand-specific metallo-endoribonuclease involved in late-stage 70S ribosome quality control and in maturation of the 3' terminus of the 16S rRNA. The chain is Endoribonuclease YbeY from Ehrlichia ruminantium (strain Gardel).